Reading from the N-terminus, the 92-residue chain is UPF0223 protein EF_2462 (92 aa).

It belongs to the UPF0223 family.

The sequence is that of UPF0223 protein EF_2462 from Enterococcus faecalis (strain ATCC 700802 / V583).